We begin with the raw amino-acid sequence, 145 residues long: Superoxide dismutase [Cu-Zn] (145 aa).

Cu cation contacts are provided by H37, H39, and H54. A disulfide bridge links C48 with C137. Positions 54, 62, 71, and 74 each coordinate Zn(2+). H111 is a binding site for Cu cation.

Belongs to the Cu-Zn superoxide dismutase family. In terms of assembly, homodimer. Cu cation is required as a cofactor. The cofactor is Zn(2+).

Its subcellular location is the cytoplasm. The enzyme catalyses 2 superoxide + 2 H(+) = H2O2 + O2. Destroys radicals which are normally produced within the cells and which are toxic to biological systems. The chain is Superoxide dismutase [Cu-Zn] from Drosophila busckii (Fruit fly).